The sequence spans 396 residues: Cell adhesion molecule 3 (396 aa).

Positions 1–22 (MGAPSALPLLLLLACSWAPGGA) are cleaved as a signal peptide. Positions 23–124 (NLSQDDSQPW…VRTAKSLVTV (102 aa)) constitute an Ig-like V-type domain. Topologically, residues 23 to 328 (NLSQDDSQPW…PVPSSSSTYH (306 aa)) are extracellular. Intrachain disulfides connect Cys-48/Cys-108, Cys-150/Cys-207, and Cys-252/Cys-297. Ig-like C2-type domains lie at 128–226 (PQKP…QRIE) and 231–313 (PTAM…FTLN). Asn-288 is a glycosylation site (N-linked (GlcNAc...) asparagine). A helical membrane pass occupies residues 329–349 (AIIGGIVAFIVFLLLILLIFL). The Cytoplasmic segment spans residues 350–396 (GHYLIRHKGTYLTHEAKGSDDAPDADTAIINAEGGQSGGDDKKEYFI). A disordered region spans residues 365–396 (AKGSDDAPDADTAIINAEGGQSGGDDKKEYFI). Phosphoserine is present on Ser-386.

It belongs to the nectin family. Homodimer. Can form trans-heterodimers with NECTIN3. Interacts with EPB41L1, DLG3, PALS2 and CASK. As to expression, mainly expressed in brain, in neuronal cell bodies of cerebellum, cortex, hippocampus, hypothalamus and spinal cord. In spinal cord predominantly expressed in motor neurons. Expressed in axons, presynaptic nerve terminals, glia cell processes.

The protein localises to the cell membrane. Its subcellular location is the cell junction. Involved in cell-cell adhesion. Has both calcium-independent homophilic cell-cell adhesion activity and calcium-independent heterophilic cell-cell adhesion activity with IGSF4, NECTIN1 and NECTIN3. Interaction with EPB41L1 may regulate structure or function of cell-cell junctions. This chain is Cell adhesion molecule 3 (Cadm3), found in Mus musculus (Mouse).